Reading from the N-terminus, the 163-residue chain is Putative H/ACA ribonucleoprotein complex subunit 2-like protein (163 aa).

This sequence belongs to the eukaryotic ribosomal protein eL8 family. In terms of assembly, component of the small nucleolar ribonucleoprotein particle containing H/ACA-type snoRNAs (H/ACA snoRNPs).

It localises to the nucleus. The protein resides in the nucleolus. Required for ribosome biogenesis. Part of a complex which catalyzes pseudouridylation of rRNA. This involves the isomerization of uridine such that the ribose is subsequently attached to C5, instead of the normal N1. Pseudouridine ('psi') residues may serve to stabilize the conformation of rRNAs. This Caenorhabditis briggsae protein is Putative H/ACA ribonucleoprotein complex subunit 2-like protein.